A 389-amino-acid chain; its full sequence is Na(+)/H(+) antiporter NhaA (389 aa).

A run of 10 helical transmembrane segments spans residues 8–28 (INFL…ALVW), 48–68 (ISLH…MAAI), 91–111 (MATL…NALI), 119–139 (GWGI…RVVF), 173–193 (NPVA…AYLL), 214–234 (AGLY…VPFL), 262–282 (WKIF…GVEF), 288–308 (LTWL…FLMG), 327–347 (LLVA…VSGV), and 361–381 (GALF…VLGI).

The protein belongs to the NhaA Na(+)/H(+) (TC 2.A.33) antiporter family.

It localises to the cell membrane. The catalysed reaction is Na(+)(in) + 2 H(+)(out) = Na(+)(out) + 2 H(+)(in). In terms of biological role, na(+)/H(+) antiporter that extrudes sodium in exchange for external protons. In Desulfitobacterium hafniense (strain DSM 10664 / DCB-2), this protein is Na(+)/H(+) antiporter NhaA.